The sequence spans 70 residues: Frenatin 4.1 (70 aa).

The N-terminal stretch at methionine 1 to cysteine 22 is a signal peptide. Residues glutamate 23 to arginine 46 constitute a propeptide that is removed on maturation. Lysine 68 carries the post-translational modification Lysine amide.

Belongs to the frog skin active peptide (FSAP) family. Frenatin subfamily. As to expression, expressed by the skin glands.

It localises to the secreted. Its subcellular location is the target cell membrane. In terms of biological role, peptide with unknown function. Does not show antimicrobial activity against S.aureus (MIC&gt;512 ug/mL), E.coli (MIC&gt;512 ug/mL) and C.albicans (MIC&gt;512 ug/mL). Does not show hemolytic activity. Antimicrobial peptide with activity against E.coli (MIC=128 ug/mL or 54 uM) and C.albicans (MIC=256 ug/mL or 108 uM). Does not show activity against S.aureus (MIC&gt;512 ug/mL). Does not show hemolytic activity. This Nyctimystes infrafrenatus (White-lipped tree frog) protein is Frenatin 4.1.